The following is a 205-amino-acid chain: Small ribosomal subunit protein uS4 (205 aa).

Residues 17 to 46 (ENIWGRPKSPVNKREYGPGQHGQRRKGKLS) are disordered. Residues 94–157 (SRLDAVVYRA…KQLVIVLESV (64 aa)) enclose the S4 RNA-binding domain.

Belongs to the universal ribosomal protein uS4 family. In terms of assembly, part of the 30S ribosomal subunit. Contacts protein S5. The interaction surface between S4 and S5 is involved in control of translational fidelity.

Its function is as follows. One of the primary rRNA binding proteins, it binds directly to 16S rRNA where it nucleates assembly of the body of the 30S subunit. Functionally, with S5 and S12 plays an important role in translational accuracy. This Mesorhizobium japonicum (strain LMG 29417 / CECT 9101 / MAFF 303099) (Mesorhizobium loti (strain MAFF 303099)) protein is Small ribosomal subunit protein uS4.